The chain runs to 726 residues: Transferrin (726 aa).

The signal sequence occupies residues 1–16 (MLLCLTLLFSASAVLA). Transferrin-like domains lie at 29-367 (YKVC…ERDT) and 374-719 (VRFC…VIRA). Cystine bridges form between Cys32–Cys63 and Cys41–Cys54. 2 residues coordinate Fe(3+): Asp78 and Tyr111. Intrachain disulfides connect Cys135/Cys231, Cys184/Cys210, Cys207/Cys216, and Cys274/Cys287. 4 residues coordinate hydrogencarbonate: Thr137, Arg141, Val143, and Gly144. An N-linked (GlcNAc...) asparagine glycan is attached at Asn162. Residue Tyr225 coordinates Fe(3+). Residues Asn337 and Asn358 are each glycosylated (N-linked (GlcNAc...) asparagine). Intrachain disulfides connect Cys377–Cys414 and Cys387–Cys405. Fe(3+) is bound by residues Asp429 and Tyr457. Cys481 and Cys562 form a disulfide bridge. Hydrogencarbonate is bound by residues Thr483, Arg487, Ala489, and Gly490. Residues Tyr573 and His642 each contribute to the Fe(3+) site.

This sequence belongs to the transferrin family.

It is found in the secreted. Transferrins are iron binding transport proteins which bind Fe(3+) ion in association with the binding of an anion, usually bicarbonate. The chain is Transferrin from Blaberus discoidalis (Tropical cockroach).